We begin with the raw amino-acid sequence, 372 residues long: Monocyte differentiation antigen CD14 (372 aa).

Positions 1-17 are cleaved as a signal peptide; it reads MKLMLGLLLLPLTLVHA. Disulfide bonds link C25-C38 and C36-C53. 2 N-linked (GlcNAc...) asparagine glycosylation sites follow: N39 and N46. LRR repeat units follow at residues 57-84, 85-120, 121-146, 147-174, 175-198, 199-226, 227-253, 254-278, 279-299, 300-321, and 322-346; these read EDVEFYGGGRSLEYLLKRVDTEANLGQY, TDIIRSLPLKRLTVRSARVPTQILFGTLRVLGYSGL, RELTLENLEVTGTALSPLLDATGPDL, NTLSLRNVSWATTDTWLAELQQWLKPGL, KVLSIAQAHSLNFSCKQVGVFPAL, ATLDLSDNPELGEKGLISALCPHKFPTL, QVLALRNAGMETTSGVCSALAAARVPL, QALDLSHNSLRDTAGTPSCDWPSQL, NSLNLSFTGLEHVPKGLPAKL, SVLDLSYNRLDRKPRPEELPEV, and GSLSLTGNPFLHSESQSEAYNSGVV. Residues N153 and N186 are each glycosylated (N-linked (GlcNAc...) asparagine). 2 cysteine pairs are disulfide-bonded: C189–C219 and C243–C272. The N-linked (GlcNAc...) asparagine glycan is linked to N282. The segment at 290-372 is required for response to bacterial lipopolysaccharide (LPS); the sequence is HVPKGLPAKL…ALLLGHRLFV (83 aa). N342 is lipidated: GPI-anchor amidated asparagine. A propeptide spans 343–372 (removed in mature form); that stretch reads SGVVIATALSPGSAGLSGTLALLLGHRLFV.

In terms of assembly, belongs to the lipopolysaccharide (LPS) receptor, a multi-protein complex containing at least CD14, LY96 and TLR4. Interacts with LPS-bound LPB. Interacts with LPAR1. Interacts with the TLR2:TLR6 or TLR2:TLR1 heterodimers; upon interaction with ligands such as diacylated lipopeptides and triacylated lipopeptides, respectively. Interacts with MYO18A. Interacts with FSTL1. In terms of tissue distribution, detected in macrophages and peripheral blood monocytes.

The protein localises to the cell membrane. The protein resides in the secreted. Its subcellular location is the membrane raft. It localises to the golgi apparatus. Coreceptor for bacterial lipopolysaccharide. In concert with LBP, binds to monomeric lipopolysaccharide and delivers it to the LY96/TLR4 complex, thereby mediating the innate immune response to bacterial lipopolysaccharide (LPS). Acts via MyD88, TIRAP and TRAF6, leading to NF-kappa-B activation, cytokine secretion and the inflammatory response. Acts as a coreceptor for TLR2:TLR6 heterodimer in response to diacylated lipopeptides and for TLR2:TLR1 heterodimer in response to triacylated lipopeptides, these clusters trigger signaling from the cell surface and subsequently are targeted to the Golgi in a lipid-raft dependent pathway. Binds electronegative LDL (LDL(-)) and mediates the cytokine release induced by LDL(-). The protein is Monocyte differentiation antigen CD14 (Cd14) of Rattus norvegicus (Rat).